We begin with the raw amino-acid sequence, 275 residues long: MKLSLLAIAAIAPFVSAHYFFDTLIIDGQESSPNQYVRSNTRAAKYNPTKWVNTRDNMTPDMPDFRCNKGAFTFAGQTGTAEVKAGSKLALKLGVGATMKHPGPALVYMSKAPSTAKTYQGDGDWFKIYEEGVCDKNKDLKSDAWCSWDKDRVEFTIPADLPDGEYLIRPEHIGVHGAHAGEAEFYYSCAQVKVVGGGNGNPGPTVKFPGAYKKDDPSFNFSIYGGYKEYPMPGPEVWSGASGSKSYSKVVNVNAADATSEGTFGHREHARDFNY.

Residues 1 to 17 form the signal peptide; that stretch reads MKLSLLAIAAIAPFVSA. Residues His18 and His101 each coordinate Cu(2+). Cys67 and Cys189 are joined by a disulfide. Residue His176 participates in O2 binding. Position 186 (Tyr186) interacts with Cu(2+). An N-linked (GlcNAc...) asparagine glycan is attached at Asn220.

Belongs to the polysaccharide monooxygenase AA9 family. Cu(2+) serves as cofactor.

Its subcellular location is the secreted. The catalysed reaction is [(1-&gt;4)-beta-D-glucosyl]n+m + reduced acceptor + O2 = 4-dehydro-beta-D-glucosyl-[(1-&gt;4)-beta-D-glucosyl]n-1 + [(1-&gt;4)-beta-D-glucosyl]m + acceptor + H2O.. Its function is as follows. Lytic polysaccharide monooxygenase (LPMO) that depolymerizes crystalline and amorphous polysaccharides via the oxidation of scissile alpha- or beta-(1-4)-glycosidic bonds, yielding C1 or C4 oxidation products. Catalysis by LPMOs requires the reduction of the active-site copper from Cu(II) to Cu(I) by a reducing agent and H(2)O(2) or O(2) as a cosubstrate. The protein is AA9 family lytic polysaccharide monooxygenase D of Aspergillus tamarii.